Consider the following 128-residue polypeptide: Con-Ins F2c (128 aa).

Residues 1–24 (MTTSSYFLLVALGLLLYVCRSSFG) form the signal peptide. 4 disulfide bridges follow: C29–C104, C41–C107, C53–C120, and C106–C111. The propeptide at 59 to 89 (LQGGTGKKRGRASLLRKRRAFLSMLKARAKR) is c peptide. E115 carries the 4-carboxyglutamate; partial modification. Serine amide is present on S127.

The protein belongs to the insulin family. Heterodimer of A and B chains; disulfide-linked. In terms of tissue distribution, expressed by the venom gland.

It localises to the secreted. Functionally, this venom insulin facilitates prey capture by rapidly inducing hypoglycemic shock. Intraperitoneal injection of this peptide into zebrafish lowers blood glucose with the same potency than human insulin. In vivo, when applied to water, this peptide reduces overall locomotor activity of zebrafish larvae, observed as a significant decrease in the percentage of time spent swimming and movement frequency. This chain is Con-Ins F2c, found in Conus floridulus (Cone snail).